We begin with the raw amino-acid sequence, 369 residues long: 2-aminoethylphosphonate--pyruvate transaminase (369 aa).

Lys193 carries the post-translational modification N6-(pyridoxal phosphate)lysine.

It belongs to the class-V pyridoxal-phosphate-dependent aminotransferase family. PhnW subfamily. As to quaternary structure, homodimer. It depends on pyridoxal 5'-phosphate as a cofactor.

It catalyses the reaction (2-aminoethyl)phosphonate + pyruvate = phosphonoacetaldehyde + L-alanine. Involved in phosphonate degradation. The chain is 2-aminoethylphosphonate--pyruvate transaminase from Burkholderia thailandensis (strain ATCC 700388 / DSM 13276 / CCUG 48851 / CIP 106301 / E264).